The chain runs to 196 residues: Ribosome maturation factor RimP (196 aa).

The interval 164 to 196 is disordered; that stretch reads LAPQKPNKPGPKKPGHEKKKPSNESAAGKPRAE. Positions 173 to 182 are enriched in basic residues; sequence GPKKPGHEKK.

This sequence belongs to the RimP family.

The protein localises to the cytoplasm. Its function is as follows. Required for maturation of 30S ribosomal subunits. This is Ribosome maturation factor RimP from Xanthomonas euvesicatoria pv. vesicatoria (strain 85-10) (Xanthomonas campestris pv. vesicatoria).